Reading from the N-terminus, the 323-residue chain is tRNA U34 carboxymethyltransferase (323 aa).

Carboxy-S-adenosyl-L-methionine-binding positions include Lys91, Trp105, Lys110, Gly130, 152 to 154 (DPT), 181 to 182 (IE), Met196, Tyr200, and Arg315.

This sequence belongs to the class I-like SAM-binding methyltransferase superfamily. CmoB family. In terms of assembly, homotetramer.

The enzyme catalyses carboxy-S-adenosyl-L-methionine + 5-hydroxyuridine(34) in tRNA = 5-carboxymethoxyuridine(34) in tRNA + S-adenosyl-L-homocysteine + H(+). In terms of biological role, catalyzes carboxymethyl transfer from carboxy-S-adenosyl-L-methionine (Cx-SAM) to 5-hydroxyuridine (ho5U) to form 5-carboxymethoxyuridine (cmo5U) at position 34 in tRNAs. The protein is tRNA U34 carboxymethyltransferase of Escherichia coli O81 (strain ED1a).